The primary structure comprises 126 residues: Glycine cleavage system H protein (126 aa).

The Lipoyl-binding domain occupies 21 to 103 (TVTVGISDHA…YESGWIARIK (83 aa)). Position 62 is an N6-lipoyllysine (Lys-62).

This sequence belongs to the GcvH family. In terms of assembly, the glycine cleavage system is composed of four proteins: P, T, L and H. It depends on (R)-lipoate as a cofactor.

Its function is as follows. The glycine cleavage system catalyzes the degradation of glycine. The H protein shuttles the methylamine group of glycine from the P protein to the T protein. In Aliivibrio fischeri (strain MJ11) (Vibrio fischeri), this protein is Glycine cleavage system H protein.